We begin with the raw amino-acid sequence, 65 residues long: Large ribosomal subunit protein bL35 (65 aa).

The protein belongs to the bacterial ribosomal protein bL35 family.

In Prochlorococcus marinus (strain MIT 9313), this protein is Large ribosomal subunit protein bL35.